The sequence spans 309 residues: Dihydroorotate dehydrogenase B (NAD(+)), catalytic subunit (309 aa).

FMN contacts are provided by residues S21 and 45-46 (KA). Residues K45 and 69–73 (NAIGL) contribute to the substrate site. 2 residues coordinate FMN: N99 and N127. N127 contacts substrate. Catalysis depends on C130, which acts as the Nucleophile. Residues K165 and I191 each contribute to the FMN site. 192–193 (NT) serves as a coordination point for substrate. Residues G217, 243-244 (GG), and 265-266 (GT) contribute to the FMN site.

This sequence belongs to the dihydroorotate dehydrogenase family. Type 1 subfamily. Heterotetramer of 2 PyrK and 2 PyrD type B subunits. Requires FMN as cofactor.

The protein localises to the cytoplasm. The catalysed reaction is (S)-dihydroorotate + NAD(+) = orotate + NADH + H(+). Its pathway is pyrimidine metabolism; UMP biosynthesis via de novo pathway; orotate from (S)-dihydroorotate (NAD(+) route): step 1/1. Functionally, catalyzes the conversion of dihydroorotate to orotate with NAD(+) as electron acceptor. In Exiguobacterium sibiricum (strain DSM 17290 / CCUG 55495 / CIP 109462 / JCM 13490 / 255-15), this protein is Dihydroorotate dehydrogenase B (NAD(+)), catalytic subunit (pyrD).